The sequence spans 202 residues: Small ribosomal subunit protein uS5 (202 aa).

The 64-residue stretch at 42-105 folds into the S5 DRBM domain; the sequence is LKDEVLKIMP…ILAKLSIVPV (64 aa). Threonine 192 bears the Phosphothreonine mark.

This sequence belongs to the universal ribosomal protein uS5 family. As to quaternary structure, component of the small ribosomal subunit. Interacts with zinc finger protein ZNF277 (via zinc-finger domains); the interaction is direct; the interaction is extra-ribosomal. Interaction with ZNF277 competes with the binding of RPS2 to protein arginine methyltransferase PRMT3. Citrullinated by PADI4 in the Arg/Gly-rich region. Post-translationally, asymmetric arginine dimethylation by PRMT3 occurs at multiple sites in the Arg/Gly-rich region. In terms of processing, monoubiquitinated by RNF10 when a ribosome has stalled during translation, leading to its degradation by the proteasome. Deubiquitinated by USP10, preventing degradation by the proteasome and promoting 40S ribosome subunit recycling following ribosome dissociation.

It is found in the cytoplasm. It localises to the nucleus. The protein localises to the nucleolus. Functionally, component of the ribosome, a large ribonucleoprotein complex responsible for the synthesis of proteins in the cell. The small ribosomal subunit (SSU) binds messenger RNAs (mRNAs) and translates the encoded message by selecting cognate aminoacyl-transfer RNA (tRNA) molecules. The large subunit (LSU) contains the ribosomal catalytic site termed the peptidyl transferase center (PTC), which catalyzes the formation of peptide bonds, thereby polymerizing the amino acids delivered by tRNAs into a polypeptide chain. The nascent polypeptides leave the ribosome through a tunnel in the LSU and interact with protein factors that function in enzymatic processing, targeting, and the membrane insertion of nascent chains at the exit of the ribosomal tunnel. Plays a role in the assembly and function of the 40S ribosomal subunit. Mutations in this protein affects the control of translational fidelity. Involved in nucleolar processing of pre-18S ribosomal RNA and ribosome assembly. This Cricetulus griseus (Chinese hamster) protein is Small ribosomal subunit protein uS5 (RPS2).